The sequence spans 326 residues: Aspartate carbamoyltransferase catalytic subunit (326 aa).

Carbamoyl phosphate is bound by residues Arg58 and Thr59. L-aspartate is bound at residue Lys86. Residues Arg108, His141, and Gln144 each contribute to the carbamoyl phosphate site. L-aspartate is bound by residues Arg181 and Arg239. Carbamoyl phosphate is bound by residues Gly280 and Pro281.

This sequence belongs to the aspartate/ornithine carbamoyltransferase superfamily. ATCase family. In terms of assembly, heterododecamer (2C3:3R2) of six catalytic PyrB chains organized as two trimers (C3), and six regulatory PyrI chains organized as three dimers (R2).

The enzyme catalyses carbamoyl phosphate + L-aspartate = N-carbamoyl-L-aspartate + phosphate + H(+). The protein operates within pyrimidine metabolism; UMP biosynthesis via de novo pathway; (S)-dihydroorotate from bicarbonate: step 2/3. Its function is as follows. Catalyzes the condensation of carbamoyl phosphate and aspartate to form carbamoyl aspartate and inorganic phosphate, the committed step in the de novo pyrimidine nucleotide biosynthesis pathway. This is Aspartate carbamoyltransferase catalytic subunit from Synechococcus sp. (strain JA-2-3B'a(2-13)) (Cyanobacteria bacterium Yellowstone B-Prime).